A 473-amino-acid chain; its full sequence is Hexaprenyl pyrophosphate synthase, mitochondrial (473 aa).

3 residues coordinate isopentenyl diphosphate: Lys-84, Arg-87, and His-186. 2 residues coordinate Mg(2+): Asp-193 and Asp-197. An all-trans-polyprenyl diphosphate is bound at residue Arg-202. Residue Arg-203 participates in isopentenyl diphosphate binding. 4 residues coordinate an all-trans-polyprenyl diphosphate: Lys-323, Thr-324, Gln-361, and Lys-378.

It belongs to the FPP/GGPP synthase family. The cofactor is Mg(2+).

Its subcellular location is the mitochondrion inner membrane. The protein operates within cofactor biosynthesis; ubiquinone biosynthesis. Functionally, assembly of polyisoprenoid side chains. The polyprenyl synthase of coenzyme Q biosynthesis catalyzes the formation from isopentenyl diphosphate of all trans-polyprenyl pyrophosphates generally ranging in length of between 6 and 10 isoprene units depending on the species. This chain is Hexaprenyl pyrophosphate synthase, mitochondrial (COQ1), found in Saccharomyces cerevisiae (strain ATCC 204508 / S288c) (Baker's yeast).